The chain runs to 547 residues: Flagellar hook-associated protein 1 (547 aa).

The protein belongs to the flagella basal body rod proteins family.

It is found in the secreted. The protein resides in the bacterial flagellum. This Escherichia coli (strain K12) protein is Flagellar hook-associated protein 1 (flgK).